Here is a 140-residue protein sequence, read N- to C-terminus: ATP synthase epsilon chain (140 aa).

Belongs to the ATPase epsilon chain family. F-type ATPases have 2 components, CF(1) - the catalytic core - and CF(0) - the membrane proton channel. CF(1) has five subunits: alpha(3), beta(3), gamma(1), delta(1), epsilon(1). CF(0) has three main subunits: a, b and c.

The protein localises to the cell inner membrane. Its function is as follows. Produces ATP from ADP in the presence of a proton gradient across the membrane. This Alkalilimnicola ehrlichii (strain ATCC BAA-1101 / DSM 17681 / MLHE-1) protein is ATP synthase epsilon chain.